The chain runs to 524 residues: Nuclear distribution protein PAC1 (524 aa).

The stretch at 65–90 forms a coiled coil; it reads STVLRLQRKIIDLENEVGTLRSIVDG. 8 WD repeats span residues 121 to 160, 166 to 217, 220 to 262, 277 to 317, 353 to 394, 415 to 454, 463 to 492, and 493 to 524; these read QQNQ…TSIP, AHTR…HIRT, GHDH…KSFT, NSQL…GLAL, IPQE…LIPH, GHQS…VTGS, GHDG…DATE, and EESH…KLWS.

The protein belongs to the WD repeat LIS1/nudF family. Self-associates. Interacts with NDL1 and dynein.

It is found in the cytoplasm. The protein resides in the cytoskeleton. It localises to the spindle pole. Functionally, positively regulates the activity of the minus-end directed microtubule motor protein dynein. Plays a central role in positioning the mitotic spindle at the bud neck during cell division. Targets cytoplasmic dynein to microtubule plus ends, thereby promoting dynein-mediated microtubule sliding along the bud cortex and consequently the movement of the mitotic spindle to the bud neck. The chain is Nuclear distribution protein PAC1 from Scheffersomyces stipitis (strain ATCC 58785 / CBS 6054 / NBRC 10063 / NRRL Y-11545) (Yeast).